The following is a 633-amino-acid chain: Phosphomethylpyrimidine synthase (633 aa).

Residues asparagine 245, methionine 274, tyrosine 303, histidine 339, 359–361 (SRG), 400–403 (DGLR), and glutamate 439 each bind substrate. Histidine 443 contacts Zn(2+). Tyrosine 466 is a binding site for substrate. Histidine 507 provides a ligand contact to Zn(2+). The [4Fe-4S] cluster site is built by cysteine 587, cysteine 590, and cysteine 595.

It belongs to the ThiC family. As to quaternary structure, homodimer. The cofactor is [4Fe-4S] cluster.

It carries out the reaction 5-amino-1-(5-phospho-beta-D-ribosyl)imidazole + S-adenosyl-L-methionine = 4-amino-2-methyl-5-(phosphooxymethyl)pyrimidine + CO + 5'-deoxyadenosine + formate + L-methionine + 3 H(+). The protein operates within cofactor biosynthesis; thiamine diphosphate biosynthesis. Functionally, catalyzes the synthesis of the hydroxymethylpyrimidine phosphate (HMP-P) moiety of thiamine from aminoimidazole ribotide (AIR) in a radical S-adenosyl-L-methionine (SAM)-dependent reaction. In Neisseria meningitidis serogroup A / serotype 4A (strain DSM 15465 / Z2491), this protein is Phosphomethylpyrimidine synthase.